A 1224-amino-acid chain; its full sequence is Serine/threonine-protein kinase CST20 (1224 aa).

Residues 1–18 show a composition bias toward polar residues; sequence MSILSENNPTPTSITDPN. 2 disordered regions span residues 1 to 378 and 403 to 464; these read MSIL…TAHN and TNSS…HSQE. 2 stretches are compositionally biased toward low complexity: residues 57–70 and 95–119; these read NTTS…SLGS and DSGS…NPES. Residues 144-155 are compositionally biased toward basic and acidic residues; sequence HQGDDSDNEKQY. Composition is skewed to polar residues over residues 169–191, 201–218, and 231–240; these read DSYS…NNVS, TSSL…NENA, and PTSKTSSFHD. Residues 242-251 are compositionally biased toward low complexity; sequence SSVISSSTSV. 2 stretches are compositionally biased toward polar residues: residues 256–271 and 305–324; these read SNPT…SYKS and DTLS…TLQG. 2 stretches are compositionally biased toward low complexity: residues 343-375 and 433-462; these read NTSA…STST and KVRG…NSHS. The region spanning 469 to 482 is the CRIB domain; sequence ISTPFNAKHLAHVG. Disordered stretches follow at residues 539–825 and 861–913; these read FHFD…ALAD and LREK…KQAA. Over residues 544–555 the composition is skewed to polar residues; sequence NKSSSSGWSNEN. Residues 564–575 show a composition bias toward gly residues; the sequence is SNSGSGSGGGGA. A compositionally biased stretch (polar residues) spans 598–607; the sequence is ITPSQSMPTK. Over residues 608-622 the composition is skewed to basic and acidic residues; the sequence is TESKQSENQHPHEDN. A compositionally biased stretch (polar residues) spans 623–636; sequence ATQYTPRTPTSHVQ. 3 stretches are compositionally biased toward low complexity: residues 664–677, 690–704, and 730–743; these read PSSQ…SQSD, SPSK…SKSL, and SIPK…SLSS. Over residues 744–755 the composition is skewed to polar residues; it reads QLRPATNGSTTA. The span at 783–801 shows a compositional bias: pro residues; the sequence is APPPPPSAPPAPPVPPAPP. The segment covering 805–820 has biased composition (polar residues); the sequence is LSEQTSEIPQQRTAPS. The span at 861-870 shows a compositional bias: basic and acidic residues; that stretch reads LREKNERQNR. A compositionally biased stretch (polar residues) spans 871–886; sequence QQETGQNNADTASGGS. Residues 947 to 1199 enclose the Protein kinase domain; sequence YVDLVKIGQG…ADELLHDNFI (253 aa). ATP contacts are provided by residues 953–961 and lysine 977; that span reads IGQGASGGV. Residue aspartate 1067 is the Proton acceptor of the active site.

The protein belongs to the protein kinase superfamily. STE Ser/Thr protein kinase family. STE20 subfamily.

The protein resides in the cytoplasm. The protein localises to the nucleus. The catalysed reaction is L-seryl-[protein] + ATP = O-phospho-L-seryl-[protein] + ADP + H(+). The enzyme catalyses L-threonyl-[protein] + ATP = O-phospho-L-threonyl-[protein] + ADP + H(+). In terms of biological role, MAP4K component of the MAPK pathway required for the mating pheromone response, and the regulation of cell polarity and cell cycle. Phosphorylates histone H2B to form H2BS10ph. Required for hyphal formation and virulence. This is Serine/threonine-protein kinase CST20 (CST20) from Candida albicans (strain WO-1) (Yeast).